Consider the following 332-residue polypeptide: tRNA-dihydrouridine synthase B (332 aa).

FMN is bound by residues 16 to 18 (PMA) and glutamine 70. Residue cysteine 100 is the Proton donor of the active site. Residues lysine 139, 200–202 (NGD), and 224–225 (GR) contribute to the FMN site.

This sequence belongs to the Dus family. DusB subfamily. FMN serves as cofactor.

It carries out the reaction a 5,6-dihydrouridine in tRNA + NAD(+) = a uridine in tRNA + NADH + H(+). The catalysed reaction is a 5,6-dihydrouridine in tRNA + NADP(+) = a uridine in tRNA + NADPH + H(+). Catalyzes the synthesis of 5,6-dihydrouridine (D), a modified base found in the D-loop of most tRNAs, via the reduction of the C5-C6 double bond in target uridines. This is tRNA-dihydrouridine synthase B from Pasteurella multocida (strain Pm70).